The primary structure comprises 239 residues: tRNA (guanine-N(7)-)-methyltransferase (239 aa).

Residues G64, E87–I88, N120–A121, and L140 contribute to the S-adenosyl-L-methionine site. The active site involves D143. S218–E220 contacts S-adenosyl-L-methionine.

The protein belongs to the class I-like SAM-binding methyltransferase superfamily. TrmB family.

It is found in the nucleus. It catalyses the reaction guanosine(46) in tRNA + S-adenosyl-L-methionine = N(7)-methylguanosine(46) in tRNA + S-adenosyl-L-homocysteine. It functions in the pathway tRNA modification; N(7)-methylguanine-tRNA biosynthesis. In terms of biological role, catalyzes the formation of N(7)-methylguanine at position 46 (m7G46) in tRNA. The sequence is that of tRNA (guanine-N(7)-)-methyltransferase from Culex quinquefasciatus (Southern house mosquito).